A 492-amino-acid polypeptide reads, in one-letter code: SH2 domain-containing adapter protein E (492 aa).

4 disordered regions span residues 46–193 (TASE…DKAK), 214–236 (KRTKGQRDAERVGENDGYMEPYD), 260–332 (LDGP…EQPW), and 347–384 (FEGSDRPPGREDAGRPHHWQKTLKPTLSDHGDGEKVDP). Ser103 is subject to Phosphoserine. The span at 149 to 158 (IKVDTQEKNG) shows a compositional bias: basic and acidic residues. Over residues 168–184 (TSSSSSSSSSASSSPSS) the composition is skewed to low complexity. 5 stretches are compositionally biased toward basic and acidic residues: residues 214–227 (KRTKGQRDAERVGE), 268–285 (ETVKVEATAKRRSSKDLL), 306–332 (AEVKTRPADSRLPEEDDRPAAEYEQPW), 349–361 (GSDRPPGREDAGR), and 373–383 (LSDHGDGEKVD). Residues 393–488 (WYHGSISRAE…AEHMTLLHPV (96 aa)) enclose the SH2 domain.

As to expression, expressed in heart, brain, lung and skeletal muscle.

The chain is SH2 domain-containing adapter protein E (She) from Mus musculus (Mouse).